A 468-amino-acid chain; its full sequence is MLTVYNTLTRQKETFKPLEEGRVKMYVCGPTVYNYIHIGNARSAIAFDTIRRYLEYRGYQVDYVSNFTDVDDKMIKAANAENITVPELADRYITAFKEDTKALNIEPATLNPRATDNIEEIVAFIQDLIAKDYAYAVDGDVYYRARKFKAYGHLAGQDLDQLEQGASEHTATEETLRKEDPIDFALWKAEKGNEIAWESPWGKGRPGWHIECSVMSTKYLGDTIDIHGGGQDLEFPHHENEIAQSEAKTGQTFVNYWLHNGFVTVGDDDQKMSKSLGNFVTVHDLIQEVNPQALRFLMSSTQYRRPIRYSQSLLAEAQTNLDRLKTTLDNLAFRQPTAEPGEDQIVMDKAAELEAAFVTAMDDDFNVQNGLTQLYELAKLSNQYLEQPTVQSDTLTSLATRLTRLLAIFGVVFKADQLLDTEVESLIEERQAARAAKDFAKSDAIRDQLKAQGIILEDTPQGMRWRRA.

Cys28 contributes to the Zn(2+) binding site. The 'HIGH' region signature appears at 30–40 (PTVYNYIHIGN). Zn(2+)-binding residues include Cys212, His237, and Glu241. Positions 271–275 (KMSKS) match the 'KMSKS' region motif. Lys274 lines the ATP pocket.

The protein belongs to the class-I aminoacyl-tRNA synthetase family. Monomer. Requires Zn(2+) as cofactor.

It is found in the cytoplasm. The enzyme catalyses tRNA(Cys) + L-cysteine + ATP = L-cysteinyl-tRNA(Cys) + AMP + diphosphate. The sequence is that of Cysteine--tRNA ligase from Latilactobacillus sakei subsp. sakei (strain 23K) (Lactobacillus sakei subsp. sakei).